The following is a 1603-amino-acid chain: DNA polymerase theta (1603 aa).

A Helicase ATP-binding domain is found at 38-208 (EARQFEDQHL…WLDGAKVFEA (171 aa)). 51–58 (APTSAGKS) is a binding site for ATP. Residues 149–152 (DEMH) carry the DEAH box motif. Positions 283-434 (TDSSLLEILK…GVLTRKRDAE (152 aa)) constitute a Helicase C-terminal domain.

This sequence belongs to the DNA polymerase type-A family.

The protein localises to the nucleus. The enzyme catalyses DNA(n) + a 2'-deoxyribonucleoside 5'-triphosphate = DNA(n+1) + diphosphate. Its function is as follows. DNA polymerase that promotes microhomology-mediated end-joining (MMEJ), an alternative non-homologous end-joining (NHEJ) machinery triggered in response to double-strand breaks in DNA. MMEJ is an error-prone repair pathway that produces deletions of sequences from the strand being repaired and promotes genomic rearrangements, such as telomere fusions. Required to prevent extensive loss of sequences near G-quadruplex (G4) DNA sites, which are prone to cause genome alterations, by generating deletions. The polypeptide is DNA polymerase theta (Caenorhabditis elegans).